The primary structure comprises 285 residues: tRNA pseudouridine synthase B (285 aa).

Asp40 serves as the catalytic Nucleophile.

Belongs to the pseudouridine synthase TruB family. Type 1 subfamily.

The enzyme catalyses uridine(55) in tRNA = pseudouridine(55) in tRNA. Functionally, responsible for synthesis of pseudouridine from uracil-55 in the psi GC loop of transfer RNAs. This chain is tRNA pseudouridine synthase B, found in Caldanaerobacter subterraneus subsp. tengcongensis (strain DSM 15242 / JCM 11007 / NBRC 100824 / MB4) (Thermoanaerobacter tengcongensis).